The sequence spans 364 residues: S-adenosylmethionine:tRNA ribosyltransferase-isomerase (364 aa).

This sequence belongs to the QueA family. As to quaternary structure, monomer.

The protein localises to the cytoplasm. It carries out the reaction 7-aminomethyl-7-carbaguanosine(34) in tRNA + S-adenosyl-L-methionine = epoxyqueuosine(34) in tRNA + adenine + L-methionine + 2 H(+). It functions in the pathway tRNA modification; tRNA-queuosine biosynthesis. Transfers and isomerizes the ribose moiety from AdoMet to the 7-aminomethyl group of 7-deazaguanine (preQ1-tRNA) to give epoxyqueuosine (oQ-tRNA). In Lachnoclostridium phytofermentans (strain ATCC 700394 / DSM 18823 / ISDg) (Clostridium phytofermentans), this protein is S-adenosylmethionine:tRNA ribosyltransferase-isomerase.